The sequence spans 332 residues: Palmitoyltransferase PFA3 (332 aa).

The Cytoplasmic portion of the chain corresponds to Met1–Arg13. The helical transmembrane segment at Cys14–Ile34 threads the bilayer. At Arg35–Arg37 the chain is on the lumenal side. The chain crosses the membrane as a helical span at residues Val38 to Ile58. At Tyr59–Lys147 the chain is on the cytoplasmic side. The 51-residue stretch at Arg104 to Ile154 folds into the DHHC domain. A helical transmembrane segment spans residues Phe148–Ser168. The Lumenal segment spans residues Met169–Thr188. A helical membrane pass occupies residues Leu189–Phe209. Over Ser210–Val332 the chain is Cytoplasmic.

Belongs to the DHHC palmitoyltransferase family. PFA3 subfamily. Post-translationally, autopalmitoylated.

It localises to the vacuole membrane. It catalyses the reaction L-cysteinyl-[protein] + hexadecanoyl-CoA = S-hexadecanoyl-L-cysteinyl-[protein] + CoA. Its function is as follows. Palmitoyltransferase specific for VAC8. Palmitoylates VAC8 at one or more of its N-terminal cysteine residues, which is required for its proper membrane localization. The chain is Palmitoyltransferase PFA3 (PFA3) from Candida glabrata (strain ATCC 2001 / BCRC 20586 / JCM 3761 / NBRC 0622 / NRRL Y-65 / CBS 138) (Yeast).